Consider the following 336-residue polypeptide: Ketol-acid reductoisomerase (NADP(+)) (336 aa).

The 181-residue stretch at 1 to 181 (MNVYYDKDCN…GGGRTGIIET (181 aa)) folds into the KARI N-terminal Rossmann domain. NADP(+) is bound by residues 24 to 27 (YGSQ), R47, S50, S52, and 82 to 85 (DEFQ). The active site involves H107. G133 provides a ligand contact to NADP(+). In terms of domain architecture, KARI C-terminal knotted spans 182 to 327 (TFQDETETDL…GKLRSMMPWI (146 aa)). Residues D190, E194, E226, and E230 each coordinate Mg(2+). S251 serves as a coordination point for substrate.

The protein belongs to the ketol-acid reductoisomerase family. It depends on Mg(2+) as a cofactor.

The enzyme catalyses (2R)-2,3-dihydroxy-3-methylbutanoate + NADP(+) = (2S)-2-acetolactate + NADPH + H(+). It catalyses the reaction (2R,3R)-2,3-dihydroxy-3-methylpentanoate + NADP(+) = (S)-2-ethyl-2-hydroxy-3-oxobutanoate + NADPH + H(+). Its pathway is amino-acid biosynthesis; L-isoleucine biosynthesis; L-isoleucine from 2-oxobutanoate: step 2/4. The protein operates within amino-acid biosynthesis; L-valine biosynthesis; L-valine from pyruvate: step 2/4. Its function is as follows. Involved in the biosynthesis of branched-chain amino acids (BCAA). Catalyzes an alkyl-migration followed by a ketol-acid reduction of (S)-2-acetolactate (S2AL) to yield (R)-2,3-dihydroxy-isovalerate. In the isomerase reaction, S2AL is rearranged via a Mg-dependent methyl migration to produce 3-hydroxy-3-methyl-2-ketobutyrate (HMKB). In the reductase reaction, this 2-ketoacid undergoes a metal-dependent reduction by NADPH to yield (R)-2,3-dihydroxy-isovalerate. The protein is Ketol-acid reductoisomerase (NADP(+)) of Geotalea daltonii (strain DSM 22248 / JCM 15807 / FRC-32) (Geobacter daltonii).